The sequence spans 340 residues: rRNA adenine N-6-methyltransferase (340 aa).

The span at 1-25 (MAGPQDRPRGRGPSSGRPQRPVGGR) shows a compositional bias: low complexity. Residues 1–37 (MAGPQDRPRGRGPSSGRPQRPVGGRSQRDRDRRVLGQ) form a disordered region. Residues asparagine 38, leucine 40, glycine 65, glutamate 86, aspartate 111, and alanine 127 each coordinate S-adenosyl-L-methionine. The tract at residues 284–340 (RGGAARGPGDQRGRRGRPGGGPRPDGRAGGGPRRDAGGRRTGDGRGGRPRPPRGGQA) is disordered. Gly residues predominate over residues 301–314 (PGGGPRPDGRAGGG). Residues 315–329 (PRRDAGGRRTGDGRG) show a composition bias toward basic and acidic residues.

This sequence belongs to the class I-like SAM-binding methyltransferase superfamily. rRNA adenine N(6)-methyltransferase family.

Functionally, involved in erythromycin resistance. This Aeromicrobium erythreum (strain ATCC 51598 / DSM 8599 / JCM 8359 / NBRC 15406 / NRRL B-3381) protein is rRNA adenine N-6-methyltransferase (ermA).